The following is a 452-amino-acid chain: MNITLILFLIGILGFVLNRKNIILMLISIEIMLLAITFLILVSSLNMDDIIGQTYAIYIIVVAGAESAIGLAILVAFYRLINSPVKNPRSNYSGDPAPPSGGRGPYLHFNLLPVVSSCNLIQSRNYSSVLHRKIPTHTSCVWAGLNPSFITGFSDAEGSFVVTILKNPRYKIGWNVQARFQIKLNEKDRALLLLIQNYFDNIGYISKINDRSTVEFRVSDITSLNNIIIPHFEKYQLITNKYGDLVIFKQIVSLMLENKHTTLEGLKEILEHRASLNWGLSKTLKESFPSIIPVKRVKIENNILSNLSSLPLLPGGGNWVAGFSSGEANFFITMSGTKVWLRFSIAQDSRDILLLKSLVKFFNCGYIAQYKNRKVCEFIVTKINDIIIYIIPFFDQYKIEGSKYNDYVKFKEAAILIKNKEHLTEKGLNKIIELKNSLPPPASLEGGMNKNI.

3 helical membrane-spanning segments follow: residues 1-21, 22-42, and 57-77; these read MNITLILFLIGILGFVLNRKN, IILMLISIEIMLLAITFLILV, and IYIIVVAGAESAIGLAILVAF. The tract at residues 1–80 is ndh-4L exon 1 encoded; it reads MNITLILFLI…LAILVAFYRL (80 aa). Positions 81–452 are ndh-4L intron 1 encoded; it reads INSPVKNPRS…SLEGGMNKNI (372 aa).

The protein in the N-terminal section; belongs to the complex I subunit 4L family. It in the C-terminal section; belongs to the LAGLIDADG endonuclease family.

The protein localises to the mitochondrion membrane. Functionally, mitochondrial DNA endonuclease involved in intron homing. This Neurospora crassa (strain ATCC 24698 / 74-OR23-1A / CBS 708.71 / DSM 1257 / FGSC 987) protein is Probable intron-encoded endonuclease 2.